A 139-amino-acid polypeptide reads, in one-letter code: Transcription antitermination protein NusB (139 aa).

The protein belongs to the NusB family.

Functionally, involved in transcription antitermination. Required for transcription of ribosomal RNA (rRNA) genes. Binds specifically to the boxA antiterminator sequence of the ribosomal RNA (rrn) operons. This Idiomarina loihiensis (strain ATCC BAA-735 / DSM 15497 / L2-TR) protein is Transcription antitermination protein NusB.